The sequence spans 310 residues: Acetyl-coenzyme A carboxylase carboxyl transferase subunit alpha (310 aa).

One can recognise a CoA carboxyltransferase C-terminal domain in the interval 31–285 (SFERELRIIN…KQKILRRLKQ (255 aa)).

This sequence belongs to the AccA family. In terms of assembly, acetyl-CoA carboxylase is a heterohexamer composed of biotin carboxyl carrier protein (accB), biotin carboxylase (accC) and two subunits each of ACCase subunit alpha (accA) and ACCase subunit beta (accD).

The protein localises to the plastid. The protein resides in the chloroplast. It catalyses the reaction N(6)-carboxybiotinyl-L-lysyl-[protein] + acetyl-CoA = N(6)-biotinyl-L-lysyl-[protein] + malonyl-CoA. It functions in the pathway lipid metabolism; malonyl-CoA biosynthesis; malonyl-CoA from acetyl-CoA: step 1/1. Its function is as follows. Component of the acetyl coenzyme A carboxylase (ACC) complex. First, biotin carboxylase catalyzes the carboxylation of biotin on its carrier protein (BCCP) and then the CO(2) group is transferred by the carboxyltransferase to acetyl-CoA to form malonyl-CoA. In Cyanidioschyzon merolae (strain NIES-3377 / 10D) (Unicellular red alga), this protein is Acetyl-coenzyme A carboxylase carboxyl transferase subunit alpha.